A 1307-amino-acid polypeptide reads, in one-letter code: Histone-lysine N-methyltransferase SETDB1 (1307 aa).

A coiled-coil region spans residues 30–65 (VEELGISMEELRQYIDEELEKMDCIQQRKKQLAELE). Ser112 and Ser117 each carry phosphoserine. Thr120 carries the post-translational modification Phosphothreonine. A disordered region spans residues 127-148 (DEDDDVLSIDSGDAGSRTPKDQ). Residue Lys182 forms a Glycyl lysine isopeptide (Lys-Gly) (interchain with G-Cter in SUMO2); alternate linkage. Lys182 participates in a covalent cross-link: Glycyl lysine isopeptide (Lys-Gly) (interchain with G-Cter in ubiquitin); alternate. Tudor domains follow at residues 257-320 (KLFV…LKKT) and 347-403 (LLKS…SMKT). Disordered stretches follow at residues 404–424 (SSAS…PNMG), 444–512 (IQFK…TLSE), and 531–570 (SVTS…AFHG). The segment covering 454–467 (PIAPPAPLPIPPLS) has biased composition (pro residues). Polar residues predominate over residues 476–494 (ESQLAQSRKQVAKKSTSFR). Residues 495 to 512 (PGSVGSGHSSPTSSTLSE) show a composition bias toward low complexity. Pro residues predominate over residues 539-565 (AAPPVPPVPPGPPTPPGPPAPPGPLAP). The MBD domain occupies 611 to 682 (YRGKNPLLVP…EMFCLDPYVL (72 aa)). In terms of domain architecture, Pre-SET spans 744 to 817 (VGCDCKDGCR…MCTNRLVQHG (74 aa)). Positions 746, 748, 752, 758, 760, 798, 802, 804, and 809 each coordinate Zn(2+). In terms of domain architecture, SET spans 820 to 1282 (VRLQLFKTQN…AGTELTWDYN (463 aa)). Residues 830–832 (KGW), Asp868, and Tyr870 contribute to the S-adenosyl-L-methionine site. Lys884 is covalently cross-linked (Glycyl lysine isopeptide (Lys-Gly) (interchain with G-Cter in ubiquitin)). The disordered stretch occupies residues 885–1174 (EGYESDVPTS…KNLSGPTKRQ (290 aa)). Residues 913 to 924 (EDPEESNDDSSD) show a composition bias toward acidic residues. Residues 950-966 (GQKENELSEMTSKDSRP) are compositionally biased toward basic and acidic residues. Ser1042 is subject to Phosphoserine. The segment covering 1048–1066 (FKDEGDNKQPKKEDPENRN) has biased composition (basic and acidic residues). Lys1049 is covalently cross-linked (Glycyl lysine isopeptide (Lys-Gly) (interchain with G-Cter in SUMO2); alternate). A Glycyl lysine isopeptide (Lys-Gly) (interchain with G-Cter in SUMO1); alternate cross-link involves residue Lys1049. Glycyl lysine isopeptide (Lys-Gly) (interchain with G-Cter in SUMO2) cross-links involve residues Lys1055 and Lys1085. A compositionally biased stretch (polar residues) spans 1097-1112 (SVLQSQRVVTSTQSNP). Low complexity predominate over residues 1116–1131 (LTLSSSTESEGESGTS). The segment covering 1137–1156 (GHTSATAVDSDDIQTISSGS) has biased composition (polar residues). Lys1165 is covalently cross-linked (Glycyl lysine isopeptide (Lys-Gly) (interchain with G-Cter in SUMO2)). N6,N6,N6-trimethyllysine; alternate occurs at positions 1186 and 1194. N6,N6-dimethyllysine; alternate is present on residues Lys1186 and Lys1194. Residues Arg1236 and 1239-1240 (NH) each bind S-adenosyl-L-methionine. Positions 1242, 1295, 1297, and 1302 each coordinate Zn(2+). A Post-SET domain is found at 1291–1307 (KELLCCCGAIECRGRLL).

The protein belongs to the class V-like SAM-binding methyltransferase superfamily. Histone-lysine methyltransferase family. Suvar3-9 subfamily. Part of a complex containing at least CDYL, REST, WIZ, SETDB1, EHMT1 and EHMT2. Forms a complex with ATRX, TRIM28 and ZNF274. Probably part of a corepressor complex containing ZNF304, TRIM28, SETDB1 and DNMT1. Interacts with TRIM28/TIF1B. Interacts with ATF7IP and ATF7IP2; the interaction with ATF7IP is required to stimulate histone methyltransferase activity and facilitate the conversion of dimethylated to trimethylated H3 'Lys-9'. Interacts with MBD1; interaction is abolished when MBD1 is sumoylated. Interacts with CBX1 and CBX5. Interacts with DNMT3A and DNMT3B. Interacts with SUMO2. Interacts with MPHOSPH8. Interacts with ERG. Interacts with HDAC1, HDAC2, SIN3A, SIN3B. Interacts with ATRX. Interacts with RESF1. Interacts with ZNF638. Interacts with TASOR. Interacts with ZNF263; recruited to the SIX3 promoter along with other proteins involved in chromatin modification and transcriptional corepression where it contributes to transcriptional repression. Interacts with PHF13; the interaction probably enhances SETDB1 chromatin-associated levels and activity. Interacts with VRK1. In terms of processing, degraded by the proteasome, shielded by interaction with ATF7IP. Monoubiquitinated at Lys-884 by E2 enzymes UBE2E family. The conjugated-Ub is protected from deubiquitination through the SET domain. Monoubiquitination at Lys-884 is required for catalytic activity and H3K9 methylation and endogenous retrovirus silencing. In terms of tissue distribution, ubiquitously expressed. Strong expression in liver and testis. Expressed in the brain, lungs, kidneys, uterus and seminal vesicles.

The protein resides in the nucleus. Its subcellular location is the chromosome. The enzyme catalyses N(6),N(6)-dimethyl-L-lysyl(9)-[histone H3] + S-adenosyl-L-methionine = N(6),N(6),N(6)-trimethyl-L-lysyl(9)-[histone H3] + S-adenosyl-L-homocysteine + H(+). In terms of biological role, histone methyltransferase that specifically trimethylates 'Lys-9' of histone H3. H3 'Lys-9' trimethylation represents a specific tag for epigenetic transcriptional repression by recruiting HP1 (CBX1, CBX3 and/or CBX5) proteins to methylated histones. Mainly functions in euchromatin regions, thereby playing a central role in the silencing of euchromatic genes. H3 'Lys-9' trimethylation is coordinated with DNA methylation. Probably forms a complex with MBD1 and ATF7IP that represses transcription and couples DNA methylation and histone 'Lys-9' trimethylation. Its activity is dependent on MBD1 and is heritably maintained through DNA replication by being recruited by CAF-1. SETDB1 is targeted to histone H3 by TRIM28/TIF1B, a factor recruited by KRAB zinc-finger proteins. Probably forms a corepressor complex required for activated KRAS-mediated promoter hypermethylation and transcriptional silencing of tumor suppressor genes (TSGs) or other tumor-related genes in colorectal cancer (CRC) cells. Required to maintain a transcriptionally repressive state of genes in undifferentiated embryonic stem cells (ESCs). In ESCs, in collaboration with TRIM28, is also required for H3K9me3 and silencing of endogenous and introduced retroviruses in a DNA-methylation independent-pathway. Associates at promoter regions of tumor suppressor genes (TSGs) leading to their gene silencing. The SETDB1-TRIM28-ZNF274 complex may play a role in recruiting ATRX to the 3'-exons of zinc-finger coding genes with atypical chromatin signatures to establish or maintain/protect H3K9me3 at these transcriptionally active regions. The chain is Histone-lysine N-methyltransferase SETDB1 from Mus musculus (Mouse).